The sequence spans 221 residues: uncharacterized protein (221 aa).

Residues 1 to 45 (MYAPIRSPITELNESTPSSIPVATSYATCSASFAKLVALLVDDMA) lie on the Extracellular side of the membrane. The chain crosses the membrane as a helical span at residues 46 to 66 (GLSIVLSEIYIYFKLLFLIVI). The Cytoplasmic portion of the chain corresponds to 67–221 (TESIQNKLED…KYIVVIKVEQ (155 aa)).

The protein localises to the host membrane. This is an uncharacterized protein from Acidianus filamentous virus 1 (isolate United States/Yellowstone) (AFV-1).